We begin with the raw amino-acid sequence, 362 residues long: Methylthioribose-1-phosphate isomerase (362 aa).

Residue Asp-252 is the Proton donor of the active site.

It belongs to the eIF-2B alpha/beta/delta subunits family. MtnA subfamily.

It is found in the cytoplasm. The protein resides in the nucleus. It carries out the reaction 5-(methylsulfanyl)-alpha-D-ribose 1-phosphate = 5-(methylsulfanyl)-D-ribulose 1-phosphate. It functions in the pathway amino-acid biosynthesis; L-methionine biosynthesis via salvage pathway; L-methionine from S-methyl-5-thio-alpha-D-ribose 1-phosphate: step 1/6. In terms of biological role, catalyzes the interconversion of methylthioribose-1-phosphate (MTR-1-P) into methylthioribulose-1-phosphate (MTRu-1-P). The chain is Methylthioribose-1-phosphate isomerase from Drosophila mojavensis (Fruit fly).